Here is a 348-residue protein sequence, read N- to C-terminus: Dihydroorotase (348 aa).

The Zn(2+) site is built by H17 and H19. Residues 19-21 (HLR) and N45 each bind substrate. Zn(2+)-binding residues include K103, H140, and H178. K103 bears the N6-carboxylysine mark. Residue H140 coordinates substrate. L223 provides a ligand contact to substrate. Residue D251 participates in Zn(2+) binding. Residue D251 is part of the active site. H255 and A267 together coordinate substrate.

It belongs to the metallo-dependent hydrolases superfamily. DHOase family. Class II DHOase subfamily. Homodimer. Requires Zn(2+) as cofactor.

The enzyme catalyses (S)-dihydroorotate + H2O = N-carbamoyl-L-aspartate + H(+). It functions in the pathway pyrimidine metabolism; UMP biosynthesis via de novo pathway; (S)-dihydroorotate from bicarbonate: step 3/3. Functionally, catalyzes the reversible cyclization of carbamoyl aspartate to dihydroorotate. The sequence is that of Dihydroorotase from Yersinia pseudotuberculosis serotype I (strain IP32953).